Reading from the N-terminus, the 167-residue chain is MRCGSLCRFLWLWSCLSYIEAVPIQRVQDDTKTLIKTIITRINDISPPQGVCSRPRVAGLDFIPRVQSVRTLSGMDQILATYQQILTSLQSRSVVQIANDLANLRALLRLLASAKSCPVPRARGSDTIKGLGNVLRASVHSAEVVALSRLKAALQDMLRQLDRNPGC.

A signal peptide spans 1-21; that stretch reads MRCGSLCRFLWLWSCLSYIEA. Cys117 and Cys167 form a disulfide bridge.

The protein belongs to the leptin family.

Its subcellular location is the secreted. Functionally, key player in the regulation of energy balance and body weight control. Once released into the circulation, has central and peripheral effects by binding LEPR, found in many tissues, which results in the activation of several major signaling pathways. In the hypothalamus, acts as an appetite-regulating factor that induces a decrease in food intake and an increase in energy consumption by inducing anorexinogenic factors and suppressing orexigenic neuropeptides, also regulates bone mass and secretion of hypothalamo-pituitary-adrenal hormones. In the periphery, increases basal metabolism, influences reproductive function, regulates pancreatic beta-cell function and insulin secretion, is pro-angiogenic for endothelial cell and affects innate and adaptive immunity. In the arcuate nucleus of the hypothalamus, activates by depolarization POMC neurons inducing FOS and SOCS3 expression to release anorexigenic peptides and inhibits by hyperpolarization NPY neurons inducing SOCS3 with a consequent reduction on release of orexigenic peptides. In addition to its known satiety inducing effect, has a modulatory role in nutrient absorption. In the intestine, reduces glucose absorption by enterocytes by activating PKC and leading to a sequential activation of p38, PI3K and ERK signaling pathways which exerts an inhibitory effect on glucose absorption. Acts as a growth factor on certain tissues, through the activation of different signaling pathways increases expression of genes involved in cell cycle regulation such as CCND1, via JAK2-STAT3 pathway, or VEGFA, via MAPK1/3 and PI3K-AKT1 pathways. May also play an apoptotic role via JAK2-STAT3 pathway and up-regulation of BIRC5 expression. Pro-angiogenic, has mitogenic activity on vascular endothelial cells and plays a role in matrix remodeling by regulating the expression of matrix metalloproteinases (MMPs) and tissue inhibitors of metalloproteinases (TIMPs). In innate immunity, modulates the activity and function of neutrophils by increasing chemotaxis and the secretion of oxygen radicals. Increases phagocytosis by macrophages and enhances secretion of pro-inflammatory mediators. Increases cytotoxic ability of NK cells. Plays a pro-inflammatory role, in synergy with IL1B, by inducing NOS2 which promotes the production of IL6, IL8 and Prostaglandin E2, through a signaling pathway that involves JAK2, PI3K, MAP2K1/MEK1 and MAPK14/p38. In adaptive immunity, promotes the switch of memory T-cells towards T helper-1 cell immune responses. Increases CD4(+)CD25(-) T-cell proliferation and reduces autophagy during TCR (T-cell receptor) stimulation, through MTOR signaling pathway activation and BCL2 up-regulation. This chain is Leptin (LEP), found in Phoca vitulina (Harbor seal).